Reading from the N-terminus, the 223-residue chain is UPF0441 protein YgiB (223 aa).

Over residues 178-195 (TVPKTAMAPKPATTTTVT) the composition is skewed to low complexity. A disordered region spans residues 178–223 (TVPKTAMAPKPATTTTVTRGGFGESVAKQSTMQRGATGTSSRSMGG). A compositionally biased stretch (polar residues) spans 204 to 223 (AKQSTMQRGATGTSSRSMGG).

It belongs to the UPF0441 family.

The polypeptide is UPF0441 protein YgiB (Escherichia coli O6:K15:H31 (strain 536 / UPEC)).